Consider the following 36-residue polypeptide: Pancreatic polypeptide (36 aa).

Tyr-36 carries the tyrosine amide modification.

It belongs to the NPY family.

The protein localises to the secreted. Functionally, hormone secreted by pancreatic cells that acts as a regulator of pancreatic and gastrointestinal functions probably by signaling through the G protein-coupled receptor NPY4R2. The chain is Pancreatic polypeptide (PPY) from Tapirus pinchaque (Mountain tapir).